Consider the following 922-residue polypeptide: Histidine kinase 5 (922 aa).

2 coiled-coil regions span residues 86-120 (MQDNAVRLLKEELKNLDRQREEAEAKELKIIEEYK) and 169-205 (KQKALSLEKMLEASTERERRLMEKLSESLKTMESQSA). The Histidine kinase domain maps to 373–614 (TMSHEIRSPL…TFTFILPYKV (242 aa)). His376 carries the phosphohistidine; by autocatalysis modification. Disordered regions lie at residues 620-639 (YSDDQDEFSDMADQQSEPDD) and 728-773 (NGRC…TEVK). The span at 738–747 (SCSSSQASSE) shows a compositional bias: low complexity. Residues 761–773 (SHREEEKAETEVK) show a composition bias toward basic and acidic residues. The region spanning 779–921 (KILLVEDNKI…KLRECLQQYL (143 aa)) is the Response regulatory domain. Asp785, Asp828, and Cys830 together coordinate Mg(2+). 4-aspartylphosphate is present on Asp828.

In terms of assembly, interacts with AHP1, APH2, APH3, APH5 and APH6, but not with APH4. As to expression, present in light-grown but not in etiolated seedlings. Mostly expressed in roots flowers and siliques, and, to a lower extent, in stems and leaves, especially in guard cells.

It localises to the cell membrane. It is found in the cytoplasm. It carries out the reaction ATP + protein L-histidine = ADP + protein N-phospho-L-histidine.. Its function is as follows. Functions as a histidine kinase and transmits the stress signal to a downstream MAPK cascade. This protein undergoes an ATP-dependent autophosphorylation at a conserved histidine residue in the kinase core, and a phosphoryl group is then transferred to a conserved aspartate residue in the receiver domain. Negative regulator of the ETR1-dependent abscisic acid (ABA) and ethylene signaling pathway that inhibits the root elongation. Promotes stomatal closure. Regulates stomatal opening by integrating multiple signals via hydrogen peroxide H(2)O(2) homeostasis in guard cells in an ABA-independent manner. May contribute to basal defense mechanisms by closing stomata in the presence of bacterial pathogens. Regulates both hormone levels and ROS production in response to stress. Required for full immunity to bacterial pathogen and necrotrophic fungus. This is Histidine kinase 5 (AHK5) from Arabidopsis thaliana (Mouse-ear cress).